Reading from the N-terminus, the 97-residue chain is MTKITKEEVNKVAHLARLELNENEINNHAEQLEKILDYIRQLEKIDTDDVPCTTRAIEVVNVFRKDEKKNSDCNEELLELGPSREDKYFKVPKILNE.

This sequence belongs to the GatC family. Heterotrimer of A, B and C subunits.

It carries out the reaction L-glutamyl-tRNA(Gln) + L-glutamine + ATP + H2O = L-glutaminyl-tRNA(Gln) + L-glutamate + ADP + phosphate + H(+). The catalysed reaction is L-aspartyl-tRNA(Asn) + L-glutamine + ATP + H2O = L-asparaginyl-tRNA(Asn) + L-glutamate + ADP + phosphate + 2 H(+). Allows the formation of correctly charged Asn-tRNA(Asn) or Gln-tRNA(Gln) through the transamidation of misacylated Asp-tRNA(Asn) or Glu-tRNA(Gln) in organisms which lack either or both of asparaginyl-tRNA or glutaminyl-tRNA synthetases. The reaction takes place in the presence of glutamine and ATP through an activated phospho-Asp-tRNA(Asn) or phospho-Glu-tRNA(Gln). This chain is Aspartyl/glutamyl-tRNA(Asn/Gln) amidotransferase subunit C, found in Prochlorococcus marinus (strain AS9601).